We begin with the raw amino-acid sequence, 370 residues long: StAR-related lipid transfer protein 7, mitochondrial (370 aa).

The N-terminal 58 residues, 1–58, are a transit peptide targeting the mitochondrion; it reads MLPRRLLAAWLAGTRGGGLLALLANQCRFVTGLRVRRAQQIAQLYGRLYSESSRRVLL. Residues 86–111 are a coiled coil; the sequence is DEERIQEEELQRSINEMKRLEEMSNM. 2 disordered regions span residues 111–138 and 343–370; these read MFQS…EGKE and MSSE…IEYA. In terms of domain architecture, START spans 112–327; the sequence is FQSSGVQHHP…LHMATLKAKN (216 aa).

Proteolytically cleaved by PARL. As to expression, expressed in nasal epithelial cells. Down-regulated in nasal epithelial cells in patients experiencing an asthma exacerbation as compared to stable asthmatics and healthy controls.

It localises to the mitochondrion. In terms of biological role, may play a protective role in mucosal tissues by preventing exaggerated allergic responses. This chain is StAR-related lipid transfer protein 7, mitochondrial (STARD7), found in Homo sapiens (Human).